The following is a 343-amino-acid chain: Ribosomal RNA small subunit methyltransferase C (343 aa).

This sequence belongs to the methyltransferase superfamily. RsmC family. Monomer.

It localises to the cytoplasm. It catalyses the reaction guanosine(1207) in 16S rRNA + S-adenosyl-L-methionine = N(2)-methylguanosine(1207) in 16S rRNA + S-adenosyl-L-homocysteine + H(+). Functionally, specifically methylates the guanine in position 1207 of 16S rRNA in the 30S particle. This chain is Ribosomal RNA small subunit methyltransferase C, found in Shigella boydii serotype 4 (strain Sb227).